The chain runs to 341 residues: N-acetyl-gamma-glutamyl-phosphate reductase (341 aa).

The active site involves Cys-163.

The protein belongs to the NAGSA dehydrogenase family. Type 1 subfamily.

The protein localises to the cytoplasm. It catalyses the reaction N-acetyl-L-glutamate 5-semialdehyde + phosphate + NADP(+) = N-acetyl-L-glutamyl 5-phosphate + NADPH + H(+). It participates in amino-acid biosynthesis; L-arginine biosynthesis; N(2)-acetyl-L-ornithine from L-glutamate: step 3/4. Functionally, catalyzes the NADPH-dependent reduction of N-acetyl-5-glutamyl phosphate to yield N-acetyl-L-glutamate 5-semialdehyde. This chain is N-acetyl-gamma-glutamyl-phosphate reductase, found in Idiomarina loihiensis (strain ATCC BAA-735 / DSM 15497 / L2-TR).